The primary structure comprises 178 residues: CD209 antigen-like protein C (178 aa).

The cysteines at positions 48 and 59 are disulfide-linked. The C-type lectin domain occupies 54–169 (VFQGNCYFFS…CTIKKYWICK (116 aa)). Asparagine 70 carries N-linked (GlcNAc...) asparagine glycosylation. Cystine bridges form between cysteine 76-cysteine 168 and cysteine 147-cysteine 160. Residues glutamate 138, asparagine 140, glutamate 145, asparagine 156, and aspartate 157 each contribute to the Ca(2+) site.

Probable pathogen-recognition receptor. May recognize in a calcium-dependent manner high mannose N-linked oligosaccharides in a variety of pathogen antigens. This chain is CD209 antigen-like protein C (Cd209c), found in Mus musculus (Mouse).